A 152-amino-acid chain; its full sequence is Toxin Res (152 aa).

This sequence belongs to the MbcT/ParT/Res family. In terms of assembly, homodimer. Forms a complex with cognate antitoxin Xre.

Toxic component of a type II toxin-antitoxin (TA) system. Expression in E.coli inhibits cell growth; bacteriostasis is neutralized by expression of cognate antitoxin Xre. Probably depletes intracellular NAD(+). This is Toxin Res from Yersinia enterocolitica serotype O:8 / biotype 1B (strain NCTC 13174 / 8081).